Here is a 370-residue protein sequence, read N- to C-terminus: GTPase Obg (370 aa).

In terms of domain architecture, Obg spans 1–159; sequence MKFIDEARIE…RMLKLELKVL (159 aa). The segment at 128–147 is disordered; that stretch reads LHFKSSTNRAPRQKTDGKPG. Residues 160–334 enclose the OBG-type G domain; sequence ADVGLLGMPN…LCYAIYDYLS (175 aa). GTP contacts are provided by residues 166–173, 191–195, 213–216, 284–287, and 315–317; these read GMPNAGKS, FTTLA, DIPG, NKLD, and SAL. Mg(2+) is bound by residues S173 and T193.

Belongs to the TRAFAC class OBG-HflX-like GTPase superfamily. OBG GTPase family. In terms of assembly, monomer. Requires Mg(2+) as cofactor.

Its subcellular location is the cytoplasm. Its function is as follows. An essential GTPase which binds GTP, GDP and possibly (p)ppGpp with moderate affinity, with high nucleotide exchange rates and a fairly low GTP hydrolysis rate. Plays a role in control of the cell cycle, stress response, ribosome biogenesis and in those bacteria that undergo differentiation, in morphogenesis control. The sequence is that of GTPase Obg from Burkholderia orbicola (strain MC0-3).